Here is a 38-residue protein sequence, read N- to C-terminus: Histone H5 (38 aa).

The segment covering 1–15 (TESPIPVPAPAPAAK) has biased composition (pro residues). Residues 1 to 38 (TESPIPVPAPAPAAKPKPKRVSKRPASHPPYSDMIAAA) are disordered. Over residues 16–26 (PKPKRVSKRPA) the composition is skewed to basic residues.

The protein belongs to the histone H1/H5 family. As to expression, erythroid cells.

The protein resides in the nucleus. It is found in the chromosome. Functionally, histone H5 performs the same function as H1, being necessary for the condensation of nucleosome chains into higher order structures, and replaces histone H1 in certain cells. The polypeptide is Histone H5 (Columba livia (Rock dove)).